We begin with the raw amino-acid sequence, 89 residues long: Phosphoribulokinase, chloroplastic (89 aa).

The interval Leu-1 to Leu-22 is disordered.

This sequence belongs to the phosphoribulokinase family.

The protein resides in the plastid. It localises to the chloroplast. It carries out the reaction D-ribulose 5-phosphate + ATP = D-ribulose 1,5-bisphosphate + ADP + H(+). The protein operates within carbohydrate biosynthesis; Calvin cycle. With respect to regulation, light regulated via thioredoxin by reversible oxidation/reduction of sulfhydryl/disulfide groups. In Vitis sp. (Grape), this protein is Phosphoribulokinase, chloroplastic.